We begin with the raw amino-acid sequence, 170 residues long: Cathelicidin antimicrobial peptide (170 aa).

Positions 1–30 (MNTQWDSPSLGRWSLVLLLLGLVMPLAIVA) are cleaved as a signal peptide. Residues 31-131 (QVLSYQEAVL…DISCDKDKRK (101 aa)) constitute a propeptide, cathelin-like domain (CLD). 2 disulfides stabilise this stretch: Cys-86–Cys-97 and Cys-108–Cys-125. Residues 150–162 (LKNIGQRIKDFFG) form an active core region.

It belongs to the cathelicidin family. As to quaternary structure, monomer, homodimer or homotrimer (in vitro). Oligomerizes as tetra- or hexamer in solution (in vitro). In terms of processing, proteolytically cleaved by proteinase PRTN3 into antibacterial peptide LL-37. Proteolytically cleaved by cathepsin CTSG and neutrophil elastase ELANE. Post-translationally, resistant to proteolytic degradation in solution, and when bound to both zwitterionic (mimicking mammalian membranes) and negatively charged membranes (mimicking bacterial membranes). After secretion onto the skin surface, the CAMP gene product is processed by a serine protease-dependent mechanism into multiple novel antimicrobial peptides distinct from and shorter than cathelicidin LL-37. These peptides show enhanced antimicrobial action, acquiring the ability to kill skin pathogens such as S.aureus, E.coli and C.albicans. These peptides have lost the ability to stimulate CXCL8/IL8 release from keratinocytes. The peptides act synergistically, killing bacteria at lower concentrations when present together, and maintain activity at increased salt condition.

Its subcellular location is the secreted. The protein localises to the vesicle. Functionally, antimicrobial protein that is an integral component of the innate immune system. Binds to bacterial lipopolysaccharides (LPS). Acts via neutrophil N-formyl peptide receptors to enhance the release of CXCL2. Postsecretory processing generates multiple cathelicidin antimicrobial peptides with various lengths which act as a topical antimicrobial defense in sweat on skin. The unprocessed precursor form, cathelicidin antimicrobial peptide, inhibits the growth of Gram-negative E.coli and E.aerogenes with efficiencies comparable to that of the mature peptide LL-37 (in vitro). Its function is as follows. Antimicrobial peptide that is an integral component of the innate immune system. Binds to bacterial lipopolysaccharides (LPS). Causes membrane permeabilization by forming transmembrane pores (in vitro). Causes lysis of E.coli. Exhibits antimicrobial activity against Gram-negative bacteria such as P.aeruginosa, S.typhimurium, E.aerogenes, E.coli and P.syringae, Gram-positive bacteria such as L.monocytogenes, S.epidermidis, S.pyogenes and S.aureus, as well as vancomycin-resistant enterococci (in vitro). Exhibits antimicrobial activity against methicillin-resistant S.aureus, P.mirabilis, and C.albicans in low-salt media, but not in media containing 100 mM NaCl (in vitro). Forms chiral supramolecular assemblies with quinolone signal (PQS) molecules of P.aeruginosa, which may lead to interference of bacterial quorum signaling and perturbance of bacterial biofilm formation. May form supramolecular fiber-like assemblies on bacterial membranes. Induces cytokine and chemokine producation as well as TNF/TNFA and CSF2/GMCSF production in normal human keratinocytes. Exhibits hemolytic activity against red blood cells. In terms of biological role, exhibits antimicrobial activity against E.coli and B.megaterium (in vitro). The polypeptide is Cathelicidin antimicrobial peptide (Ateles fusciceps (Brown-headed spider monkey)).